A 150-amino-acid polypeptide reads, in one-letter code: Ribonuclease K6 (150 aa).

Residues Met1 to Ala23 form the signal peptide. His38 acts as the Proton acceptor in catalysis. Disulfide bonds link Cys46–Cys104, Cys60–Cys114, Cys78–Cys129, and Cys85–Cys92. Asn55 carries N-linked (GlcNAc...) asparagine glycosylation. Residues Lys61–Thr65 and Lys86 contribute to the substrate site. Residue Asn100 is glycosylated (N-linked (GlcNAc...) asparagine). Arg105 is a binding site for substrate. The active-site Proton donor is the His145.

The protein belongs to the pancreatic ribonuclease family. Interacts (via N-terminus) with bacterial lipopolysaccharide (LPS). Highly expressed in spleen (at protein level). Has little or no expression in healthy kidneys (at protein level). Detected in interstitial leukocytes in infected kidneys (at protein level). Expressed in ureter where it localizes to urothelial and submucosal leukocytes (at protein level). Strong expression in lung and thymus, and lower expression in heart, placenta, pancreas, liver, brain and skeletal muscle. Also expressed in monocytes and neutrophils.

The protein localises to the secreted. It is found in the lysosome. Its subcellular location is the cytoplasmic granule. Its function is as follows. Ribonuclease which shows a preference for the pyrimidines uridine and cytosine. Has potent antibacterial activity against a range of Gram-positive and Gram-negative bacteria, including P.aeruginosa, A.baumanii, M.luteus, S.aureus, E.faecalis, E.faecium, S.saprophyticus and E.coli. Causes loss of bacterial membrane integrity, and also promotes agglutination of Gram-negative bacteria. Probably contributes to urinary tract sterility. Bactericidal activity is independent of RNase activity. This is Ribonuclease K6 (RNASE6) from Homo sapiens (Human).